The chain runs to 330 residues: MRIRYGWELALAALLVIEIVAFGAINPRMLDLNMLLFSTSDFICIGIVALPLTMVIVSGGIDISFGSTIGLCAIALGVLFQSGVPMPLAILLTLLLGALCGLINAGLIIYTKVNPLVITLGTLYLFAGSALLLSGMAGATGYEGIGGFPMAFTDFANLDVLGLPVPLIIFLICLLVFWLWLHKTHAGRNVFLIGQSPRVAVYSAIPVNRTLCALYAMTGLASAVAAVLLVSYFGSARSDLGASFLMPAITAVVLGGANIYGGSGSIIGTAIAVLLVGYLQQGLQMAGVPNQVSSALSGALLIVVVVGRSVSLHRQQIKEWLARRANNPLP.

Residues 1–4 (MRIR) lie on the Cytoplasmic side of the membrane. A helical transmembrane segment spans residues 5–25 (YGWELALAALLVIEIVAFGAI). Topologically, residues 26 to 42 (NPRMLDLNMLLFSTSDF) are periplasmic. A helical membrane pass occupies residues 43 to 63 (ICIGIVALPLTMVIVSGGIDI). Over 64–67 (SFGS) the chain is Cytoplasmic. Transmembrane regions (helical) follow at residues 68–88 (TIGL…PMPL) and 89–109 (AILL…GLII). Over 110–115 (YTKVNP) the chain is Cytoplasmic. The chain crosses the membrane as a helical span at residues 116–136 (LVITLGTLYLFAGSALLLSGM). Residues 137 to 159 (AGATGYEGIGGFPMAFTDFANLD) are Periplasmic-facing. A helical transmembrane segment spans residues 160–180 (VLGLPVPLIIFLICLLVFWLW). At 181-209 (LHKTHAGRNVFLIGQSPRVAVYSAIPVNR) the chain is on the cytoplasmic side. Residues 210–230 (TLCALYAMTGLASAVAAVLLV) form a helical membrane-spanning segment. The Periplasmic portion of the chain corresponds to 231–237 (SYFGSAR). 2 helical membrane-spanning segments follow: residues 238–258 (SDLG…GGAN) and 259–279 (IYGG…VGYL). The Periplasmic segment spans residues 280–285 (QQGLQM). A helical transmembrane segment spans residues 286-306 (AGVPNQVSSALSGALLIVVVV). Residues 307 to 330 (GRSVSLHRQQIKEWLARRANNPLP) are Cytoplasmic-facing.

The protein belongs to the binding-protein-dependent transport system permease family. AraH/RbsC subfamily. In terms of assembly, the complex is composed of two ATP-binding proteins (LsrA), two transmembrane proteins (LsrC and LsrD) and a solute-binding protein (LsrB).

It is found in the cell inner membrane. Functionally, part of the ABC transporter complex LsrABCD involved in autoinducer 2 (AI-2) import. Probably responsible for the translocation of the substrate across the membrane. The sequence is that of Autoinducer 2 import system permease protein LsrD (lsrD) from Escherichia coli (strain SMS-3-5 / SECEC).